Here is a 79-residue protein sequence, read N- to C-terminus: Cytochrome b (79 aa).

Helical transmembrane passes span 1–7, 31–52, and 67–79; these read TALFLAM, WLIR…YLHI, and WNIG…LTMM. The heme b site is built by His-37 and His-51.

Belongs to the cytochrome b family. In terms of assembly, the cytochrome bc1 complex contains 3 respiratory subunits (MT-CYB, CYC1 and UQCRFS1), 2 core proteins (UQCRC1 and UQCRC2) and probably 6 low-molecular weight proteins. Requires heme b as cofactor.

The protein localises to the mitochondrion inner membrane. Component of the ubiquinol-cytochrome c reductase complex (complex III or cytochrome b-c1 complex) that is part of the mitochondrial respiratory chain. The b-c1 complex mediates electron transfer from ubiquinol to cytochrome c. Contributes to the generation of a proton gradient across the mitochondrial membrane that is then used for ATP synthesis. The sequence is that of Cytochrome b (mt-cyb) from Julidochromis regani (Convict julie).